Reading from the N-terminus, the 216-residue chain is Uracil phosphoribosyltransferase (216 aa).

Residues Arg-85, Arg-110, and 135–143 (DPMVATGYS) contribute to the 5-phospho-alpha-D-ribose 1-diphosphate site. Residues Ile-200 and 205 to 207 (GDA) contribute to the uracil site. Asp-206 contacts 5-phospho-alpha-D-ribose 1-diphosphate.

The protein belongs to the UPRTase family. The cofactor is Mg(2+).

It catalyses the reaction UMP + diphosphate = 5-phospho-alpha-D-ribose 1-diphosphate + uracil. It functions in the pathway pyrimidine metabolism; UMP biosynthesis via salvage pathway; UMP from uracil: step 1/1. Allosterically activated by GTP. Its function is as follows. Catalyzes the conversion of uracil and 5-phospho-alpha-D-ribose 1-diphosphate (PRPP) to UMP and diphosphate. This Paraburkholderia phymatum (strain DSM 17167 / CIP 108236 / LMG 21445 / STM815) (Burkholderia phymatum) protein is Uracil phosphoribosyltransferase.